The chain runs to 213 residues: Penicillin-binding protein activator LpoB (213 aa).

The first 19 residues, 1-19, serve as a signal peptide directing secretion; that stretch reads MMKMNRYALVAALAIFLSG. C20 carries the N-palmitoyl cysteine lipid modification. C20 is lipidated: S-diacylglycerol cysteine. Residues 26-71 are disordered; it reads PAPVDEVKPAPEQPAEPQQPVPVVPSVPTIPQQPGPIEHEDQTAQP. The span at 36-50 shows a compositional bias: pro residues; sequence PEQPAEPQQPVPVVP.

This sequence belongs to the LpoB family. Interacts with PBP1b.

Its subcellular location is the cell outer membrane. In terms of biological role, regulator of peptidoglycan synthesis that is essential for the function of penicillin-binding protein 1B (PBP1b). The sequence is that of Penicillin-binding protein activator LpoB from Citrobacter koseri (strain ATCC BAA-895 / CDC 4225-83 / SGSC4696).